Consider the following 188-residue polypeptide: Accessory gene regulator protein B (188 aa).

The next 4 membrane-spanning stretches (helical) occupy residues 49–69, 100–122, 143–163, and 164–184; these read VALI…YFLV, VYFQ…LIIY, LLSI…PEPF, and KQLI…IFFP.

The protein belongs to the AgrB family.

The protein localises to the cell membrane. Functionally, essential for the production of a quorum sensing system signal molecule, the autoinducing peptide (AIP). This quorum sensing system is responsible for the regulation of the expression of virulence factor genes. Involved in the proteolytic processing of AgrD, the precursor of AIP. The chain is Accessory gene regulator protein B from Staphylococcus haemolyticus (strain JCSC1435).